Reading from the N-terminus, the 349-residue chain is Ribosome production factor 1 (349 aa).

Disordered regions lie at residues 1–58 (MAKA…SEIK) and 71–105 (KQQQ…PKTI). Residues 87 to 97 (KEREALGDKAP) are compositionally biased toward basic and acidic residues. A Brix domain is found at 142-325 (PKILITTSDR…LRSLQKGTFD (184 aa)). The interval 303–320 (VGIQELGPRFTLKLRSLQ) is RNA-binding.

The protein resides in the nucleus. It is found in the nucleolus. Its function is as follows. May be required for ribosome biogenesis. This is Ribosome production factor 1 (Rpf1) from Mus musculus (Mouse).